The sequence spans 277 residues: Ubiquinone biosynthesis protein COQ4, mitochondrial (277 aa).

Residues 1-14 constitute a mitochondrion transit peptide; it reads MLTKRALRTTDPYR. Histidine 157, aspartate 158, histidine 161, and glutamate 173 together coordinate Zn(2+).

Belongs to the COQ4 family. In terms of assembly, component of a multi-subunit COQ enzyme complex, composed of at least COQ3, COQ4, COQ5, COQ6, COQ7 and COQ9. It depends on Zn(2+) as a cofactor.

Its subcellular location is the mitochondrion inner membrane. The enzyme catalyses a 4-hydroxy-3-methoxy-5-(all-trans-polyprenyl)benzoate + H(+) = a 2-methoxy-6-(all-trans-polyprenyl)phenol + CO2. It participates in cofactor biosynthesis; ubiquinone biosynthesis. Lyase that catalyzes the C1-decarboxylation of 4-hydroxy-3-methoxy-5-(all-trans-polyprenyl)benzoic acid into 2-methoxy-6-(all-trans-polyprenyl)phenol during ubiquinone biosynthesis. The chain is Ubiquinone biosynthesis protein COQ4, mitochondrial from Ajellomyces capsulatus (strain G186AR / H82 / ATCC MYA-2454 / RMSCC 2432) (Darling's disease fungus).